Consider the following 257-residue polypeptide: Ditrans,polycis-undecaprenyl-diphosphate synthase ((2E,6E)-farnesyl-diphosphate specific) (257 aa).

The active site involves Asp-34. Asp-34 is a Mg(2+) binding site. Substrate is bound by residues 35–38 (GNGR), Trp-39, Arg-47, and His-51. The active-site Proton acceptor is the Asn-82. Substrate-binding positions include Trp-83, Arg-85, Arg-201, and 207–209 (RLS). Glu-220 provides a ligand contact to Mg(2+).

Belongs to the UPP synthase family. In terms of assembly, homodimer. The cofactor is Mg(2+).

It carries out the reaction 8 isopentenyl diphosphate + (2E,6E)-farnesyl diphosphate = di-trans,octa-cis-undecaprenyl diphosphate + 8 diphosphate. Its function is as follows. Catalyzes the sequential condensation of isopentenyl diphosphate (IPP) with (2E,6E)-farnesyl diphosphate (E,E-FPP) to yield (2Z,6Z,10Z,14Z,18Z,22Z,26Z,30Z,34E,38E)-undecaprenyl diphosphate (di-trans,octa-cis-UPP). UPP is the precursor of glycosyl carrier lipid in the biosynthesis of bacterial cell wall polysaccharide components such as peptidoglycan and lipopolysaccharide. This is Ditrans,polycis-undecaprenyl-diphosphate synthase ((2E,6E)-farnesyl-diphosphate specific) from Francisella tularensis subsp. tularensis (strain SCHU S4 / Schu 4).